A 127-amino-acid polypeptide reads, in one-letter code: MAYRKLGRDSAHRKAMLREMTTQLIMNERIVTTETRAKEIRKTTEKMITLGKRGDLSARRKAAAFVRNEIADIHEEKDAVVVKSALQKLFSDIAPRYKDRNGGYTRMYKLANPRKGDAAPMVIIELV.

The protein belongs to the bacterial ribosomal protein bL17 family. In terms of assembly, part of the 50S ribosomal subunit. Contacts protein L32.

In Lactobacillus johnsonii (strain CNCM I-12250 / La1 / NCC 533), this protein is Large ribosomal subunit protein bL17.